Reading from the N-terminus, the 406-residue chain is Formate-dependent phosphoribosylglycinamide formyltransferase (406 aa).

N(1)-(5-phospho-beta-D-ribosyl)glycinamide is bound by residues 28–29 and E88; that span reads EL. ATP-binding positions include R121, K162, 167–172, 202–205, and E210; these read SSGKGQ and EGFI. Residues 126–320 form the ATP-grasp domain; sequence RLAAEELGCA…EFELHAKAIL (195 aa). Mg(2+)-binding residues include E279 and E291. Residues D298, K367, and 374–375 contribute to the N(1)-(5-phospho-beta-D-ribosyl)glycinamide site; that span reads RR.

This sequence belongs to the PurK/PurT family. Homodimer.

It catalyses the reaction N(1)-(5-phospho-beta-D-ribosyl)glycinamide + formate + ATP = N(2)-formyl-N(1)-(5-phospho-beta-D-ribosyl)glycinamide + ADP + phosphate + H(+). It functions in the pathway purine metabolism; IMP biosynthesis via de novo pathway; N(2)-formyl-N(1)-(5-phospho-D-ribosyl)glycinamide from N(1)-(5-phospho-D-ribosyl)glycinamide (formate route): step 1/1. In terms of biological role, involved in the de novo purine biosynthesis. Catalyzes the transfer of formate to 5-phospho-ribosyl-glycinamide (GAR), producing 5-phospho-ribosyl-N-formylglycinamide (FGAR). Formate is provided by PurU via hydrolysis of 10-formyl-tetrahydrofolate. In Janthinobacterium sp. (strain Marseille) (Minibacterium massiliensis), this protein is Formate-dependent phosphoribosylglycinamide formyltransferase.